Here is a 268-residue protein sequence, read N- to C-terminus: Hydroxyethylthiazole kinase (268 aa).

M45 contributes to the substrate binding site. R121 and T167 together coordinate ATP. G194 is a binding site for substrate.

It belongs to the Thz kinase family. Requires Mg(2+) as cofactor.

The enzyme catalyses 5-(2-hydroxyethyl)-4-methylthiazole + ATP = 4-methyl-5-(2-phosphooxyethyl)-thiazole + ADP + H(+). It functions in the pathway cofactor biosynthesis; thiamine diphosphate biosynthesis; 4-methyl-5-(2-phosphoethyl)-thiazole from 5-(2-hydroxyethyl)-4-methylthiazole: step 1/1. In terms of biological role, catalyzes the phosphorylation of the hydroxyl group of 4-methyl-5-beta-hydroxyethylthiazole (THZ). The protein is Hydroxyethylthiazole kinase of Bacillus cereus (strain Q1).